Reading from the N-terminus, the 178-residue chain is Putative peroxiredoxin in rubredoxin operon (178 aa).

Residues 3–163 form the Thioredoxin domain; it reads RLVGKPAPEF…TLRVLKAFQT (161 aa). The active-site Cysteine sulfenic acid (-SOH) intermediate is the Cys50.

This sequence belongs to the peroxiredoxin family. AhpC/Prx1 subfamily. As to quaternary structure, homodimer; disulfide-linked, upon oxidation.

Its subcellular location is the cytoplasm. It catalyses the reaction a hydroperoxide + [protein]-dithiol = [protein]-disulfide + an alcohol + H2O. Thiol-specific peroxidase that catalyzes the reduction of hydrogen peroxide and organic hydroperoxides to water and alcohols, respectively. Plays a role in cell protection against oxidative stress by detoxifying peroxides. The protein is Putative peroxiredoxin in rubredoxin operon of Clostridium pasteurianum.